A 192-amino-acid chain; its full sequence is MAAHLCRGRGAVGRREMLRGSGKKPIQRLAKAPAATASSKTSEWRATTAYGFLPAGGDVRPHSPRYESQGVLSDPADLGERFAARDELAEEGKEERFAEPPDRRLGLDVKGAANDIGVEFIEDDPEAQVCIEAGPPLLDGRNFSRAASLLGLLGGDREKQNQVVIRSGKPHADGDWPILPPLYLSFSGLPRA.

Residues 17 to 73 are disordered; it reads MLRGSGKKPIQRLAKAPAATASSKTSEWRATTAYGFLPAGGDVRPHSPRYESQGVLS. Residues 30–41 show a composition bias toward low complexity; that stretch reads AKAPAATASSKT.

This is an uncharacterized protein from Sinorhizobium fredii (strain NBRC 101917 / NGR234).